Reading from the N-terminus, the 99-residue chain is Aspartyl/glutamyl-tRNA(Asn/Gln) amidotransferase subunit C (99 aa).

Belongs to the GatC family. In terms of assembly, heterotrimer of A, B and C subunits.

The enzyme catalyses L-glutamyl-tRNA(Gln) + L-glutamine + ATP + H2O = L-glutaminyl-tRNA(Gln) + L-glutamate + ADP + phosphate + H(+). It carries out the reaction L-aspartyl-tRNA(Asn) + L-glutamine + ATP + H2O = L-asparaginyl-tRNA(Asn) + L-glutamate + ADP + phosphate + 2 H(+). Functionally, allows the formation of correctly charged Asn-tRNA(Asn) or Gln-tRNA(Gln) through the transamidation of misacylated Asp-tRNA(Asn) or Glu-tRNA(Gln) in organisms which lack either or both of asparaginyl-tRNA or glutaminyl-tRNA synthetases. The reaction takes place in the presence of glutamine and ATP through an activated phospho-Asp-tRNA(Asn) or phospho-Glu-tRNA(Gln). The sequence is that of Aspartyl/glutamyl-tRNA(Asn/Gln) amidotransferase subunit C from Paraburkholderia phymatum (strain DSM 17167 / CIP 108236 / LMG 21445 / STM815) (Burkholderia phymatum).